Here is a 427-residue protein sequence, read N- to C-terminus: Tol-Pal system protein TolB (427 aa).

A signal peptide spans 1–23 (MKLLKRLVSVFAIVLAVGSNAFA).

It belongs to the TolB family. As to quaternary structure, the Tol-Pal system is composed of five core proteins: the inner membrane proteins TolA, TolQ and TolR, the periplasmic protein TolB and the outer membrane protein Pal. They form a network linking the inner and outer membranes and the peptidoglycan layer.

Its subcellular location is the periplasm. Its function is as follows. Part of the Tol-Pal system, which plays a role in outer membrane invagination during cell division and is important for maintaining outer membrane integrity. This Haemophilus influenzae (strain PittEE) protein is Tol-Pal system protein TolB.